Reading from the N-terminus, the 594-residue chain is Adenine deaminase 1 (594 aa).

It belongs to the metallo-dependent hydrolases superfamily. Adenine deaminase family. Mn(2+) is required as a cofactor.

The catalysed reaction is adenine + H2O + H(+) = hypoxanthine + NH4(+). The chain is Adenine deaminase 1 from Jannaschia sp. (strain CCS1).